A 119-amino-acid chain; its full sequence is Anamorsin homolog (119 aa).

The tract at residues 33-119 (LKQATKGEDC…KVKLNLTDDI (87 aa)) is disordered. [2Fe-2S] cluster contacts are provided by Cys-42, Cys-49, Cys-52, and Cys-54. The segment at 42–54 (CTTRRRACKNCVC) is fe-S binding site A. [4Fe-4S] cluster-binding residues include Cys-81, Cys-84, Cys-92, and Cys-95. 2 short sequence motifs (cx2C motif) span residues 81–84 (CGNC) and 92–95 (CANC). The tract at residues 81–95 (CGNCAKGDAFRCANC) is fe-S binding site B.

It belongs to the anamorsin family. In terms of assembly, monomer. [2Fe-2S] cluster is required as a cofactor. The cofactor is [4Fe-4S] cluster.

Its subcellular location is the cytoplasm. It is found in the mitochondrion intermembrane space. Its function is as follows. Component of the cytosolic iron-sulfur (Fe-S) protein assembly (CIA) machinery. Required for the maturation of extramitochondrial Fe-S proteins. Part of an electron transfer chain functioning in an early step of cytosolic Fe-S biogenesis, facilitating the de novo assembly of a [4Fe-4S] cluster on the cytosolic Fe-S scaffold complex. Electrons are transferred from NADPH via a FAD- and FMN-containing diflavin oxidoreductase. Together with the diflavin oxidoreductase, also required for the assembly of the diferric tyrosyl radical cofactor of ribonucleotide reductase (RNR), probably by providing electrons for reduction during radical cofactor maturation in the catalytic small subunit. The polypeptide is Anamorsin homolog (Leishmania braziliensis).